The chain runs to 395 residues: RNA ligase 1 (395 aa).

Positions 48, 65, and 83 each coordinate ATP. Lysine 113 serves as the catalytic N6-AMP-lysine intermediate. 3 residues coordinate ATP: glutamate 173, lysine 255, and lysine 257. Residue aspartate 285 coordinates Mg(2+).

Mg(2+) serves as cofactor. It depends on Mn(2+) as a cofactor.

It carries out the reaction ATP + (ribonucleotide)n-3'-hydroxyl + 5'-phospho-(ribonucleotide)m = (ribonucleotide)n+m + AMP + diphosphate.. In terms of biological role, RNA ligase that ligates single-stranded nucleic acids in an ATP-dependent manner. Catalyzes both inter- and intra-molecular single-stranded DNA (ssDNA) ligation to &gt;50% completion in a matter of hours at an elevated temperature, although favoring intra-molecular ligation on RNA and single-stranded DNA substrates. Is able to catalyze the adenylation reaction of ssDNA 3'-terminal phosphate (ssDNA 3'p) to 3'-adenylated DNA (ssDNA 3'pp5'A). Does not have significant 3'-adenylation activity with a 3'-phosphorylated nicked dsDNA substrate. This is RNA ligase 1 from Thermus scotoductus.